A 705-amino-acid polypeptide reads, in one-letter code: ATP-dependent DNA helicase Q-like 2 (705 aa).

Positions 1 to 30 (MESEAIQEDLQNLDVELKDVQGQISALIEH) form a coiled coil. A Helicase ATP-binding domain is found at 98–273 (INAIMTGRDV…IEMLHIPKCV (176 aa)). 111–118 (MAAGGGKS) is a binding site for ATP. Residues 217 to 220 (DEAH) carry the DEAH box motif. Residues 298 to 450 (VVDEIAEFIR…DIVRYCQSKT (153 aa)) form the Helicase C-terminal domain. An HRDC domain is found at 591–670 (SITFSGLELK…MRHEAVSEQL (80 aa)). Residues 668–705 (EQLVEDPTKEETCKSRLRKRAKTQKDVVLVESSGEEEA) form a disordered region.

The protein belongs to the helicase family. RecQ subfamily. In terms of assembly, interacts with WEX. Mg(2+) serves as cofactor. Mn(2+) is required as a cofactor. In terms of tissue distribution, expressed in shoots and flowers. Expressed in young leaves, inflorescences, roots, shoot apical meristem, young siliques, and mature green siliques.

The protein resides in the nucleus. It catalyses the reaction Couples ATP hydrolysis with the unwinding of duplex DNA by translocating in the 3'-5' direction.. The enzyme catalyses ATP + H2O = ADP + phosphate + H(+). Its function is as follows. 3'-5' DNA helicase that may play a role in the repair of DNA. Its DNA unwinding activity in vitro is dependent on magnesium, and ATP or dATP. Can use GTP/dGTP, CTP/dCTP or UTP/dUTP as nucleotide cofactors. Catalyzes Holliday junction branch migration and replication fork regression. Disrupts D-loop structures. Unwinds G-quadruplex DNA, found in telomeric DNA. In Arabidopsis thaliana (Mouse-ear cress), this protein is ATP-dependent DNA helicase Q-like 2.